Here is a 319-residue protein sequence, read N- to C-terminus: Protease HtpX homolog (319 aa).

Helical transmembrane passes span 6-26 and 28-48; these read TAMLLAFMTVLFMAVGYVIGG and GGMMIALVIAAGMNFFSYWNS. Residue H130 participates in Zn(2+) binding. The active site involves E131. Position 134 (H134) interacts with Zn(2+). The next 2 helical transmembrane spans lie at 145 to 165 and 172 to 192; these read LTATLAGAISMLGNFAFFFGG and PLGFIGVLIAMIVAPLAAMLV. E201 contacts Zn(2+). Residues 277–319 form a disordered region; it reads MARETSTGSTAPVRPDNAGRKSRSVPRTGWGRGGSEPPKGPWS.

The protein belongs to the peptidase M48B family. Zn(2+) is required as a cofactor.

It is found in the cell inner membrane. This chain is Protease HtpX homolog, found in Rhizobium meliloti (strain 1021) (Ensifer meliloti).